The sequence spans 432 residues: Peptidase B (432 aa).

Mn(2+) is bound by residues Lys-196 and Asp-201. Lys-208 is an active-site residue. The Mn(2+) site is built by Asp-219, Asp-278, and Glu-280. Residue Arg-282 is part of the active site.

Belongs to the peptidase M17 family. Homohexamer. Requires Mn(2+) as cofactor.

The protein localises to the cytoplasm. It catalyses the reaction Release of an N-terminal amino acid, Xaa, from a peptide or arylamide. Xaa is preferably Glu or Asp but may be other amino acids, including Leu, Met, His, Cys and Gln.. Probably plays an important role in intracellular peptide degradation. The protein is Peptidase B of Vibrio vulnificus (strain CMCP6).